Consider the following 629-residue polypeptide: Chaperone protein DnaK (629 aa).

Thr-195 carries the phosphothreonine; by autocatalysis modification. Disordered regions lie at residues 514-533 (EAEQ…EKRN) and 543-629 (LGQL…KPAE). The segment covering 555 to 590 (DAKDRLKAAADEAEEAVRSDDDSRIERAQKQLEEAM) has biased composition (basic and acidic residues). Positions 595–614 (TAAQSGSQNQAGQGAQTQTG) are enriched in low complexity. A compositionally biased stretch (basic and acidic residues) spans 615 to 629 (RQEDDVIDADFKPAE).

This sequence belongs to the heat shock protein 70 family.

In terms of biological role, acts as a chaperone. The chain is Chaperone protein DnaK from Deinococcus geothermalis (strain DSM 11300 / CIP 105573 / AG-3a).